The following is a 233-amino-acid chain: Small ribosomal subunit protein uS7m (233 aa).

A mitochondrion-targeting transit peptide spans 1–28; it reads MAAPTAAGLCPRLRAWLPRLTQVRWSRY.

This sequence belongs to the universal ribosomal protein uS7 family. In terms of assembly, component of the mitochondrial ribosome small subunit (28S) which comprises a 12S rRNA and about 30 distinct proteins.

It localises to the mitochondrion. In Gallus gallus (Chicken), this protein is Small ribosomal subunit protein uS7m (MRPS7).